The primary structure comprises 269 residues: D-aminoacyl-tRNA deacylase (269 aa).

Belongs to the DtdA deacylase family. In terms of assembly, monomer. Requires Zn(2+) as cofactor.

It carries out the reaction a D-aminoacyl-tRNA + H2O = a tRNA + a D-alpha-amino acid + H(+). The enzyme catalyses glycyl-tRNA(Ala) + H2O = tRNA(Ala) + glycine + H(+). Functionally, D-aminoacyl-tRNA deacylase with broad substrate specificity. By recycling D-aminoacyl-tRNA to D-amino acids and free tRNA molecules, this enzyme counteracts the toxicity associated with the formation of D-aminoacyl-tRNA entities in vivo. The polypeptide is D-aminoacyl-tRNA deacylase (Caldivirga maquilingensis (strain ATCC 700844 / DSM 13496 / JCM 10307 / IC-167)).